Here is a 117-residue protein sequence, read N- to C-terminus: MAKYNEKKEKKRIAKERIDILFSLAERVFPYSPELAKRYVELALLVQQKAKVKIPRKWKRRYCKKCHAFLVPGINARVRLRQKRMPHIVVKCLECGHIMRYPYIKEIKKRRKEKMEY.

Zn(2+)-binding residues include Cys63, Cys66, Cys92, and Cys95.

The protein belongs to the eukaryotic/archaeal RNase P protein component 4 family. As to quaternary structure, consists of a catalytic RNA component and at least 4 protein subunits. Forms a subcomplex with Rnp1 which stimulates the catalytic RNA. The cofactor is Zn(2+).

The protein localises to the cytoplasm. The enzyme catalyses Endonucleolytic cleavage of RNA, removing 5'-extranucleotides from tRNA precursor.. Its function is as follows. Part of ribonuclease P, a protein complex that generates mature tRNA molecules by cleaving their 5'-ends. The RNA is catalytic, but its KM for pre-tRNA is 170-fold decreased in the presence of the 4 known protein subunits (Rnp1-4). The protein subunits also decrease the amount of Mg(2+) needed for activity. This Pyrococcus furiosus (strain ATCC 43587 / DSM 3638 / JCM 8422 / Vc1) protein is Ribonuclease P protein component 4.